The primary structure comprises 232 residues: F420-dependent NADP reductase (232 aa).

Residues 15 to 18, 37 to 38, Lys42, Val80, Val106, and Ala151 contribute to the NADP(+) site; these read TGDQ and SR.

Belongs to the F420-dependent NADP reductase family. In terms of assembly, homotetramer.

The catalysed reaction is reduced coenzyme F420-(gamma-L-Glu)(n) + NADP(+) = oxidized coenzyme F420-(gamma-L-Glu)(n) + NADPH + 2 H(+). Catalyzes the reduction of NADP(+) with F420H(2) via hydride transfer, and likely the reverse reaction, i.e. the reduction of F420 with NADPH. Probably functions in the regeneration of NADPH required in biosynthetic reactions. Is specific for reduced F420 as electron donor for the reduction of NADP; neither reduced FAD nor FMN can act as electron donor. The enzyme is also specific for NADP; NAD is not utilized as substrate. This chain is F420-dependent NADP reductase (fno), found in Methanothermobacter thermautotrophicus (strain ATCC 29096 / DSM 1053 / JCM 10044 / NBRC 100330 / Delta H) (Methanobacterium thermoautotrophicum).